A 151-amino-acid chain; its full sequence is Deoxyuridine 5'-triphosphate nucleotidohydrolase (151 aa).

Residues 70-72 (RSG), asparagine 83, 87-89 (LID), and methionine 97 contribute to the substrate site.

This sequence belongs to the dUTPase family. Mg(2+) serves as cofactor.

It carries out the reaction dUTP + H2O = dUMP + diphosphate + H(+). It functions in the pathway pyrimidine metabolism; dUMP biosynthesis; dUMP from dCTP (dUTP route): step 2/2. This enzyme is involved in nucleotide metabolism: it produces dUMP, the immediate precursor of thymidine nucleotides and it decreases the intracellular concentration of dUTP so that uracil cannot be incorporated into DNA. This is Deoxyuridine 5'-triphosphate nucleotidohydrolase from Yersinia enterocolitica serotype O:8 / biotype 1B (strain NCTC 13174 / 8081).